Reading from the N-terminus, the 184-residue chain is ATP synthase subunit b, chloroplastic (184 aa).

Residues 27–49 (FATNPINLSVVLGVLIFFGKGVL) form a helical membrane-spanning segment.

The protein belongs to the ATPase B chain family. As to quaternary structure, F-type ATPases have 2 components, F(1) - the catalytic core - and F(0) - the membrane proton channel. F(1) has five subunits: alpha(3), beta(3), gamma(1), delta(1), epsilon(1). F(0) has four main subunits: a(1), b(1), b'(1) and c(10-14). The alpha and beta chains form an alternating ring which encloses part of the gamma chain. F(1) is attached to F(0) by a central stalk formed by the gamma and epsilon chains, while a peripheral stalk is formed by the delta, b and b' chains.

It localises to the plastid. The protein localises to the chloroplast thylakoid membrane. Functionally, f(1)F(0) ATP synthase produces ATP from ADP in the presence of a proton or sodium gradient. F-type ATPases consist of two structural domains, F(1) containing the extramembraneous catalytic core and F(0) containing the membrane proton channel, linked together by a central stalk and a peripheral stalk. During catalysis, ATP synthesis in the catalytic domain of F(1) is coupled via a rotary mechanism of the central stalk subunits to proton translocation. Component of the F(0) channel, it forms part of the peripheral stalk, linking F(1) to F(0). This Amborella trichopoda protein is ATP synthase subunit b, chloroplastic.